The sequence spans 307 residues: UDP-N-acetylenolpyruvoylglucosamine reductase (307 aa).

Residues 33–197 (TGGNADFYIT…LEAAFTLAPG (165 aa)) form the FAD-binding PCMH-type domain. Arg176 is an active-site residue. Catalysis depends on Ser226, which acts as the Proton donor. The active site involves Glu296.

It belongs to the MurB family. FAD serves as cofactor.

The protein localises to the cytoplasm. It carries out the reaction UDP-N-acetyl-alpha-D-muramate + NADP(+) = UDP-N-acetyl-3-O-(1-carboxyvinyl)-alpha-D-glucosamine + NADPH + H(+). The protein operates within cell wall biogenesis; peptidoglycan biosynthesis. Cell wall formation. The sequence is that of UDP-N-acetylenolpyruvoylglucosamine reductase from Staphylococcus aureus (strain MRSA252).